The chain runs to 336 residues: Acetaldehyde dehydrogenase 1 (336 aa).

NAD(+) is bound at residue 32-35 (SGVV). The active-site Acyl-thioester intermediate is the cysteine 150. Residue asparagine 309 coordinates NAD(+).

This sequence belongs to the acetaldehyde dehydrogenase family.

It carries out the reaction acetaldehyde + NAD(+) + CoA = acetyl-CoA + NADH + H(+). The polypeptide is Acetaldehyde dehydrogenase 1 (mhpF) (Mycobacterium ulcerans (strain Agy99)).